The primary structure comprises 263 residues: MGCCGSKEKYNGEDVPKSQRLENRPTNDVNGKQPQRQQPPNKRKNNTIRKGAASASQQNNPTSLFEITDLSLKNDIIEGLQEQPQDSDLLAQYGVLLSMEGKNKEAEESLRKAVEVDTDNSRAWQAYGEFLERTNNPKKAKEVYGEAYKHAAPKIALDEDDSSLLLSYAIFIQKSGEIDKAEKLYKRIVTSGARSSESLGRYGLFLLEVKKDVEKGGIYLKDAADIDPPSPEWCTRYSNYLKTYKKDEFEATKYQKRVSLYVN.

Positions 1-25 (MGCCGSKEKYNGEDVPKSQRLENRP) are enriched in basic and acidic residues. Positions 1–62 (MGCCGSKEKY…ASASQQNNPT (62 aa)) are disordered. 3 TPR repeats span residues 87–120 (SDLL…DTDN), 121–154 (SRAW…AAPK), and 162–195 (SSLL…GARS).

The protein is TPR repeat-containing protein DDB_G0285095 of Dictyostelium discoideum (Social amoeba).